Here is a 668-residue protein sequence, read N- to C-terminus: Metastasis-associated protein MTA2 (668 aa).

Positions 1–144 constitute a BAH domain; it reads MAANMYRVGD…PVQKTLLADQ (144 aa). Residues Ser52 and Ser54 each carry the phosphoserine modification. Residues 145–256 form the ELM2 domain; that stretch reads GEIRVGCKYQ…KAMSTLVPQG (112 aa). Lys152 bears the N6-acetyllysine mark. The SANT domain maps to 263-315; it reads DEMEEWSASEAMLFEEALEKYGKDFNDIRQDFLPWKSLASIVQFYYMWKTTDR. A GATA-type; atypical zinc finger spans residues 367–394; sequence CESCHTTQSAQWYAWGPPNMQCRLCASC. Over residues 409–419 the composition is skewed to polar residues; the sequence is QLEGATRGTTE. The interval 409–437 is disordered; that stretch reads QLEGATRGTTEPHSRGHLSRPEAQSLSPY. A phosphoserine mark is found at Ser433 and Ser435. N6-acetyllysine is present on Lys460. Residue Lys492 forms a Glycyl lysine isopeptide (Lys-Gly) (interchain with G-Cter in SUMO2 and SUMO3); alternate linkage. Lys492 is covalently cross-linked (Glycyl lysine isopeptide (Lys-Gly) (interchain with G-Cter in SUMO2); alternate). Lys508 is covalently cross-linked (Glycyl lysine isopeptide (Lys-Gly) (interchain with G-Cter in SUMO2)). 2 positions are modified to N6-acetyllysine: Lys522 and Lys531. The residue at position 534 (Thr534) is a Phosphothreonine. Ser548 is subject to Phosphoserine. Glycyl lysine isopeptide (Lys-Gly) (interchain with G-Cter in SUMO2) cross-links involve residues Lys559 and Lys595. Disordered stretches follow at residues 580–599 and 647–668; these read ASGI…LNPA and PPVP…VLED.

Belongs to the metastasis-associated protein family. In terms of assembly, component of the nucleosome remodeling and deacetylase (NuRD) repressor complex, composed of core proteins MTA1, MTA2, MTA3, RBBP4, RBBP7, HDAC1, HDAC2, MBD2, MBD3, and peripherally associated proteins CDK2AP1, CDK2AP2, GATAD2A, GATAD2B, CHD3, CHD4 and CHD5. The exact stoichiometry of the NuRD complex is unknown, and some subunits such as MBD2 and MBD3, GATAD2A and GATAD2B, and CHD3, CHD4 and CHD5 define mutually exclusive NuRD complexes. Interacts with CHD3. Interacts with CHD4. Interacts with GATAD2A. Interacts with HDAC7. Interacts with MBD3. Interacts with p53/TP53. Interacts with MINT. Interacts with PIMREG. Interacts with NACC2. Interacts with ERCC6. Interacts with PWWP2B. Interacts with transcription factor BCL11A. As to expression, widely expressed.

The protein resides in the nucleus. In terms of biological role, may function as a transcriptional coregulator. Acts as a component of the histone deacetylase NuRD complex which participates in the remodeling of chromatin. In Homo sapiens (Human), this protein is Metastasis-associated protein MTA2 (MTA2).